Here is a 298-residue protein sequence, read N- to C-terminus: Putative cysteine protease YopT-like blr2058 (298 aa).

Over residues 1–14 (MYNRVDGEYAHTEQ) the composition is skewed to basic and acidic residues. Disordered regions lie at residues 1–25 (MYNR…ADGS) and 59–80 (SDAI…SSSS). Low complexity predominate over residues 65–80 (SSNTSGLSTSSLSSSS). Residue C109 is part of the active site. Basic and acidic residues predominate over residues 137–162 (NHRSAARRQEQSEKLKTQLKEDKAEG). Residues 137–166 (NHRSAARRQEQSEKLKTQLKEDKAEGSHNF) form a disordered region. Residues H223 and D238 contribute to the active site.

It belongs to the peptidase C58 family.

Functionally, potential cysteine protease, which may play a central role after invasion of host cell. The protein is Putative cysteine protease YopT-like blr2058 of Bradyrhizobium diazoefficiens (strain JCM 10833 / BCRC 13528 / IAM 13628 / NBRC 14792 / USDA 110).